The primary structure comprises 158 residues: 2-C-methyl-D-erythritol 2,4-cyclodiphosphate synthase (158 aa).

A divalent metal cation is bound by residues aspartate 9 and histidine 11. 4-CDP-2-C-methyl-D-erythritol 2-phosphate contacts are provided by residues 9–11 (DVH) and 35–36 (HS). Histidine 43 provides a ligand contact to a divalent metal cation. 4-CDP-2-C-methyl-D-erythritol 2-phosphate-binding positions include 57–59 (DIG), 62–66 (FPDTD), 101–107 (AQKPKMA), 133–136 (TTTE), phenylalanine 140, and arginine 143.

The protein belongs to the IspF family. In terms of assembly, homotrimer. A divalent metal cation is required as a cofactor.

The enzyme catalyses 4-CDP-2-C-methyl-D-erythritol 2-phosphate = 2-C-methyl-D-erythritol 2,4-cyclic diphosphate + CMP. It participates in isoprenoid biosynthesis; isopentenyl diphosphate biosynthesis via DXP pathway; isopentenyl diphosphate from 1-deoxy-D-xylulose 5-phosphate: step 4/6. Involved in the biosynthesis of isopentenyl diphosphate (IPP) and dimethylallyl diphosphate (DMAPP), two major building blocks of isoprenoid compounds. Catalyzes the conversion of 4-diphosphocytidyl-2-C-methyl-D-erythritol 2-phosphate (CDP-ME2P) to 2-C-methyl-D-erythritol 2,4-cyclodiphosphate (ME-CPP) with a corresponding release of cytidine 5-monophosphate (CMP). This Bacillus pumilus (strain SAFR-032) protein is 2-C-methyl-D-erythritol 2,4-cyclodiphosphate synthase.